Consider the following 697-residue polypeptide: Protein FAM13A (697 aa).

3 disordered regions span residues 1 to 21 (MACEIMPLQSSQEDERPMSPF), 52 to 112 (HLFD…GFSN), and 133 to 229 (YIGE…QQES). S19 carries the post-translational modification Phosphoserine. Positions 58 to 78 (SSGGQSSEDSESGASSSSSTS) are enriched in low complexity. The span at 86-103 (AKEQDESRHSRDVGRLNK) shows a compositional bias: basic and acidic residues. Positions 146-169 (SSRLSELNENQDGLVNMENLNPTP) are enriched in polar residues. Over residues 170–197 (SHERTGSDHVELISDGSKENEKDGRQSQ) the composition is skewed to basic and acidic residues. Phosphoserine occurs at positions 271 and 291. 2 disordered regions span residues 307–338 (TEMPPSPPNSHPFMRRRSSSLGSYEDEQEDLT) and 398–433 (LKISEEDLPPRMRQRSNTLPKSFGSQLEKEDEKKQE). Over residues 398–407 (LKISEEDLPP) the composition is skewed to basic and acidic residues. At S401 the chain carries Phosphoserine. Over residues 412–422 (RSNTLPKSFGS) the composition is skewed to polar residues. The span at 424–433 (LEKEDEKKQE) shows a compositional bias: basic and acidic residues.

Belongs to the FAM13 family.

The protein is Protein FAM13A (FAM13A) of Bos taurus (Bovine).